A 276-amino-acid polypeptide reads, in one-letter code: Adenylate kinase (276 aa).

38–43 (GSGKGT) is an ATP binding site. Positions 58 to 87 (STGDMLRAAIEQGTETGKQAKTIMDQGGLV) are NMP. Residues Thr-59, Arg-64, 85-87 (GLV), 113-116 (GFPR), and Gln-120 contribute to the AMP site. The LID stretch occupies residues 154 to 191 (GRLVHPSSGRSYHREFFPPKVDMIDDITGEPLIQRSDD). Residues Arg-155 and 164–165 (SY) contribute to the ATP site. Arg-188 and Arg-199 together coordinate AMP. Position 227 (Lys-227) interacts with ATP.

The protein belongs to the adenylate kinase family. AK2 subfamily. In terms of assembly, monomer.

It localises to the cytoplasm. Its subcellular location is the cytosol. The protein resides in the mitochondrion intermembrane space. The catalysed reaction is AMP + ATP = 2 ADP. Its function is as follows. Catalyzes the reversible transfer of the terminal phosphate group between ATP and AMP. Plays an important role in cellular energy homeostasis and in adenine nucleotide metabolism. Adenylate kinase activity is critical for regulation of the phosphate utilization and the AMP de novo biosynthesis pathways. This is Adenylate kinase (adkA) from Dictyostelium discoideum (Social amoeba).